A 417-amino-acid polypeptide reads, in one-letter code: MLEQMGKAAKQASWQLAVLSTAKKNQVLSVMADRLEANSEAILLANEQDMAQARATGMSEALLDRLLLTPARLAAIANDVRQVCRLNDPVGHVLDGNLLDSGLKLERRRVPLGVIGVIYEARPNVTIDVASLCLKTGNAVILRGGKETHNTNQATVKVIQQALEQCGLPAAAVQAIDSPDRALVNELLRLDRYVDMLIPRGGAGLHKLCREQSTIPVITGGIGVCHTYVDADVDFDKALTVIENAKIQRPSACNSLETLLVNRSIAAEFLPALSAKMAAAGVTLHAAENALPLLQGGPATVVPVNAEDYDDEWLSLDLNVLLVDDIDQAIDHIRTHGTNHSDAILTRSLSSAEHFVRAVDSSAVYVNASTRFTDGGQFGLGAEVAVSTQKLHARGPMGLDALTTYKWIGYGDDLVRS.

Belongs to the gamma-glutamyl phosphate reductase family.

The protein resides in the cytoplasm. The catalysed reaction is L-glutamate 5-semialdehyde + phosphate + NADP(+) = L-glutamyl 5-phosphate + NADPH + H(+). Its pathway is amino-acid biosynthesis; L-proline biosynthesis; L-glutamate 5-semialdehyde from L-glutamate: step 2/2. Its function is as follows. Catalyzes the NADPH-dependent reduction of L-glutamate 5-phosphate into L-glutamate 5-semialdehyde and phosphate. The product spontaneously undergoes cyclization to form 1-pyrroline-5-carboxylate. The polypeptide is Gamma-glutamyl phosphate reductase (Serratia marcescens).